Here is a 169-residue protein sequence, read N- to C-terminus: Cell division inhibitor SulA (169 aa).

The tract at residues 106 to 112 (ALRTGNY) is ftsZ binding. The segment at 162 to 169 (KIHSNLYH) is lon protease binding.

The protein belongs to the SulA family. As to quaternary structure, interacts with FtsZ. Post-translationally, is rapidly cleaved and degraded by the Lon protease once DNA damage is repaired.

In terms of biological role, component of the SOS system and an inhibitor of cell division. Accumulation of SulA causes rapid cessation of cell division and the appearance of long, non-septate filaments. In the presence of GTP, binds a polymerization-competent form of FtsZ in a 1:1 ratio, thus inhibiting FtsZ polymerization and therefore preventing it from participating in the assembly of the Z ring. This mechanism prevents the premature segregation of damaged DNA to daughter cells during cell division. This is Cell division inhibitor SulA from Shigella flexneri serotype 5b (strain 8401).